The following is a 485-amino-acid chain: Serine/threonine-protein kinase 4 (485 aa).

Residues 30–281 (FDVLEKLGEG…ATELLQHPFI (252 aa)) enclose the Protein kinase domain. ATP-binding positions include 36 to 44 (LGEGSYGSV) and K59. D149 functions as the Proton acceptor in the catalytic mechanism. Phosphothreonine; by autocatalysis is present on T183. The region spanning 431–478 (YSFLKDWSVAEVQLKLNSLDPMMEREIEEIHHKYQAKRQPILEAIESK) is the SARAH domain.

It belongs to the protein kinase superfamily. STE Ser/Thr protein kinase family. STE20 subfamily. As to quaternary structure, homodimer; mediated via the coiled-coil region. Mg(2+) serves as cofactor. Post-translationally, autophosphorylated on Thr-183. Proteolytically cleaved by caspase-3 during apoptosis at Asp-326 resulting in a 37 kDa form. Proteolytic cleavage results in kinase activation and nuclear translocation of the truncated form (MST1/N).

The protein resides in the cytoplasm. It localises to the nucleus. The enzyme catalyses L-seryl-[protein] + ATP = O-phospho-L-seryl-[protein] + ADP + H(+). It carries out the reaction L-threonyl-[protein] + ATP = O-phospho-L-threonyl-[protein] + ADP + H(+). The C-terminal non-catalytic region inhibits the kinase activity, the enzyme is activated by caspase-cleavage. Homodimerization and autophosphorylation of Thr-183 is also required for full activation. Functionally, stress-activated, pro-apoptotic kinase which, following caspase-cleavage, enters the nucleus and induces chromatin condensation followed by internucleosomal DNA fragmentation. Key component of the Hippo signaling pathway which plays a pivotal role in organ size control and tumor suppression by restricting proliferation and promoting apoptosis. The core of this pathway is composed of a kinase cascade wherein stk3/mst2 and stk4/mst1, in complex with its regulatory protein sav1, phosphorylates and activates lats1/2 in complex with its regulatory protein mob1, which in turn phosphorylates and inactivates yap1 oncoprotein and wwtr1/taz. Phosphorylation of yap1 by lats2 inhibits its translocation into the nucleus to regulate cellular genes important for cell proliferation, cell death, and cell migration. Phosphorylates 'Ser-14' of histone H2B (H2BS14ph) during apoptosis. This chain is Serine/threonine-protein kinase 4 (stk4), found in Xenopus laevis (African clawed frog).